A 407-amino-acid chain; its full sequence is Imidazolonepropionase (407 aa).

2 residues coordinate Fe(3+): His68 and His70. 2 residues coordinate Zn(2+): His68 and His70. The 4-imidazolone-5-propanoate site is built by Arg77, Tyr140, and His173. Tyr140 is an N-formimidoyl-L-glutamate binding site. His238 contacts Fe(3+). His238 contributes to the Zn(2+) binding site. Gln241 lines the 4-imidazolone-5-propanoate pocket. Asp313 contributes to the Fe(3+) binding site. A Zn(2+)-binding site is contributed by Asp313. N-formimidoyl-L-glutamate-binding residues include Asn315 and Gly317. Thr318 is a binding site for 4-imidazolone-5-propanoate.

Belongs to the metallo-dependent hydrolases superfamily. HutI family. Requires Zn(2+) as cofactor. The cofactor is Fe(3+).

Its subcellular location is the cytoplasm. It catalyses the reaction 4-imidazolone-5-propanoate + H2O = N-formimidoyl-L-glutamate. Its pathway is amino-acid degradation; L-histidine degradation into L-glutamate; N-formimidoyl-L-glutamate from L-histidine: step 3/3. In terms of biological role, catalyzes the hydrolytic cleavage of the carbon-nitrogen bond in imidazolone-5-propanoate to yield N-formimidoyl-L-glutamate. It is the third step in the universal histidine degradation pathway. This Burkholderia pseudomallei (strain 668) protein is Imidazolonepropionase.